Consider the following 468-residue polypeptide: ATP synthase subunit beta (468 aa).

Residue 155-162 (GGAGVGKT) participates in ATP binding.

It belongs to the ATPase alpha/beta chains family. As to quaternary structure, F-type ATPases have 2 components, CF(1) - the catalytic core - and CF(0) - the membrane proton channel. CF(1) has five subunits: alpha(3), beta(3), gamma(1), delta(1), epsilon(1). CF(0) has three main subunits: a(1), b(2) and c(9-12). The alpha and beta chains form an alternating ring which encloses part of the gamma chain. CF(1) is attached to CF(0) by a central stalk formed by the gamma and epsilon chains, while a peripheral stalk is formed by the delta and b chains.

Its subcellular location is the cell membrane. The catalysed reaction is ATP + H2O + 4 H(+)(in) = ADP + phosphate + 5 H(+)(out). Produces ATP from ADP in the presence of a proton gradient across the membrane. The catalytic sites are hosted primarily by the beta subunits. The polypeptide is ATP synthase subunit beta (Streptococcus uberis (strain ATCC BAA-854 / 0140J)).